A 128-amino-acid polypeptide reads, in one-letter code: Mini-ribonuclease 3 (128 aa).

Asp17 is an active-site residue.

The protein belongs to the MrnC RNase family. Homodimer. The cofactor is Mg(2+).

Its subcellular location is the cytoplasm. Involved in correct processing of both the 5' and 3' ends of 23S rRNA precursor. Processes 30S rRNA precursor transcript even in absence of ribonuclease 3 (Rnc); Rnc processes 30S rRNA into smaller rRNA precursors. This is Mini-ribonuclease 3 from Streptococcus pneumoniae (strain ATCC BAA-255 / R6).